We begin with the raw amino-acid sequence, 361 residues long: MSNTIVVVGAGVIGLTSALLLSKNKGNKITVVAKHMPGDYDVEYASPFAGANHSPMATEESSEWERRTWYEFKRLVEEVPEAGVHFQKSRIQRRNVDTEKAQRSGFPDALFSKEPWFKNMFEDFREQHPSEVIPGYDSGCEFTSVCINTAIYLPWLLGQCIKNGVIVKRAILNDISEAKKLSHAGKTPNIIVNATGLGSYKLGGVEDKTMAPARGQIVVVRNESSPMLLTSGVEDGGADVMYLMQRAAGGGTILGGTYDVGNWESQPDPNIANRIMQRIVEVRPEIANGKGVKGLSVIRHAVGMRPWRKDGVRIEEEKLDDETWIVHNYGHSGWGYQGSYGCAENVVQLVDKVGKAAKSKL.

Residues 1–22 form the signal peptide; the sequence is MSNTIVVVGAGVIGLTSALLLS. Residues A10, I13, K34, H35, A45, S46, G50, and N52 each coordinate FAD. 2 N-linked (GlcNAc...) asparagine glycosylation sites follow: N193 and N222. (R)-lactate is bound by residues Y242, Y258, and R305. 3 residues coordinate anthranilate: Y242, Y258, and R305. Residues R305, S332, G335, Y336, and Q337 each contribute to the FAD site. The Microbody targeting signal signature appears at 359–361; it reads SKL.

Belongs to the DAMOX/DASOX family. Requires FAD as cofactor. In terms of processing, the N-terminus is blocked.

It localises to the peroxisome matrix. It carries out the reaction a D-alpha-amino acid + O2 + H2O = a 2-oxocarboxylate + H2O2 + NH4(+). Catalyzes the oxidative deamination of D-amino acids with broad substrate specificity. Enables the organism to utilize D-amino acids as a source of nutrients. In Fusarium vanettenii (Neocosmospora pisi), this protein is D-amino-acid oxidase.